Consider the following 89-residue polypeptide: Small ribosomal subunit protein uS15 (89 aa).

A disordered region spans residues 1–23 (MTLNTEAKQKIINKHQTHGTDTG).

It belongs to the universal ribosomal protein uS15 family. Part of the 30S ribosomal subunit. Forms a bridge to the 50S subunit in the 70S ribosome, contacting the 23S rRNA.

In terms of biological role, one of the primary rRNA binding proteins, it binds directly to 16S rRNA where it helps nucleate assembly of the platform of the 30S subunit by binding and bridging several RNA helices of the 16S rRNA. Its function is as follows. Forms an intersubunit bridge (bridge B4) with the 23S rRNA of the 50S subunit in the ribosome. In Prochlorococcus marinus (strain SARG / CCMP1375 / SS120), this protein is Small ribosomal subunit protein uS15.